The primary structure comprises 81 residues: MKTLLLTLVVVTIVCLDLGYTLKCNKLVPLFYKTCPAGKNLCYKIFMVATPKVPVKRGCIDVCPKNSALVKYVCCNTDRCN.

The first 21 residues, 1-21 (MKTLLLTLVVVTIVCLDLGYT), serve as a signal peptide directing secretion. 4 disulfides stabilise this stretch: Cys-24-Cys-42, Cys-35-Cys-59, Cys-63-Cys-74, and Cys-75-Cys-80.

This sequence belongs to the three-finger toxin family. Short-chain subfamily. Type IA cytotoxin sub-subfamily. Monomer in solution; Homodimer and oligomer in the presence of negatively charged lipids forming a pore with a size ranging between 20 and 30 Angstroms. As to expression, expressed by the venom gland.

The protein localises to the secreted. The protein resides in the target cell membrane. Shows cytolytic activity on many different cells by forming pore in lipid membranes. In vivo, increases heart rate or kills the animal by cardiac arrest. In addition, it binds to heparin with high affinity, interacts with Kv channel-interacting protein 1 (KCNIP1) in a calcium-independent manner, and binds to integrin alpha-V/beta-3 (ITGAV/ITGB3) with moderate affinity. The sequence is that of Cytotoxin 2 from Naja kaouthia (Monocled cobra).